A 129-amino-acid polypeptide reads, in one-letter code: uncharacterized protein (129 aa).

A helical membrane pass occupies residues 5 to 25 (IIGLTLAFFVLFLTAVAILFT).

Its subcellular location is the membrane. This is an uncharacterized protein from Mycoplasma pneumoniae (strain ATCC 29342 / M129 / Subtype 1) (Mycoplasmoides pneumoniae).